Here is a 201-residue protein sequence, read N- to C-terminus: 3-isopropylmalate dehydratase small subunit (201 aa).

This sequence belongs to the LeuD family. LeuD type 1 subfamily. As to quaternary structure, heterodimer of LeuC and LeuD.

It catalyses the reaction (2R,3S)-3-isopropylmalate = (2S)-2-isopropylmalate. Its pathway is amino-acid biosynthesis; L-leucine biosynthesis; L-leucine from 3-methyl-2-oxobutanoate: step 2/4. In terms of biological role, catalyzes the isomerization between 2-isopropylmalate and 3-isopropylmalate, via the formation of 2-isopropylmaleate. The sequence is that of 3-isopropylmalate dehydratase small subunit from Shewanella woodyi (strain ATCC 51908 / MS32).